We begin with the raw amino-acid sequence, 105 residues long: Small ribosomal subunit protein uS10 (105 aa).

Belongs to the universal ribosomal protein uS10 family. As to quaternary structure, part of the 30S ribosomal subunit.

Its function is as follows. Involved in the binding of tRNA to the ribosomes. This Rickettsia prowazekii (strain Madrid E) protein is Small ribosomal subunit protein uS10.